Consider the following 769-residue polypeptide: Disintegrin and metalloproteinase domain-containing protein 11 (769 aa).

The N-terminal stretch at 1–23 is a signal peptide; that stretch reads MRLLRRWAFAALLLSLLPTPGLG. A propeptide spanning residues 24–225 is cleaved from the precursor; that stretch reads TQGPAGALRW…PNRPRLRRKR (202 aa). Residues 40-78 form a disordered region; sequence GGPGAPEVTEPSRLVRESSGGEVRKQQLDTRVRQEPPGG. Over residues 61-73 the composition is skewed to basic and acidic residues; sequence EVRKQQLDTRVRQ. 2 N-linked (GlcNAc...) asparagine glycosylation sites follow: N96 and N163. Over 226–734 the chain is Extracellular; sequence QVRRGHPTVH…ERYKGPSGTN (509 aa). One can recognise a Peptidase M12B domain in the interval 239–438; the sequence is KYVELIVIND…GGGSCLFNKP (200 aa). Positions 332–769 are required for localization to cerebellar cortex basket cell terminals. Also required for localization of KCNA1, KCNA2, DLG4 and ADAM22 to cerebellar cortex basket cell terminal perisomatic axons and pinceaux; that stretch reads GRTFQSTSSG…NIRRGRSGGA (438 aa). Intrachain disulfides connect C349–C433, C392–C417, C394–C401, and C503–C523. In terms of domain architecture, Disintegrin spans 444-531; the sequence is PPECGNGFVE…QCPPNLHKLD (88 aa). N-linked (GlcNAc...) asparagine glycans are attached at residues N605 and N673. Intrachain disulfides connect C677–C692, C686–C698, and C700–C709. In terms of domain architecture, EGF-like spans 677 to 709; the sequence is CPGSGERRICSHHGVCSNEGKCICQPDWTGKDC. The helical transmembrane segment at 735-755 threads the bilayer; that stretch reads IIIGSIAGAVLVAAIVLGGTG. Residues 756-769 are Cytoplasmic-facing; it reads WGFKNIRRGRSGGA.

Interacts with LGI1 and LGI4. Interacts with KCNA1/KV1.1, KCNA2/KV1.2, DLG4/PSD-95 and ADAM22. In terms of processing, the precursor is cleaved by a furin endopeptidase. As to expression, expressed predominantly in brain. Slightly detected or not at all in other tissues.

The protein resides in the presynaptic cell membrane. Its subcellular location is the perikaryon. It is found in the cell projection. The protein localises to the axon. Probable ligand for integrin in the brain. This is a non catalytic metalloprotease-like protein. Required for localization of the potassium channel subunit proteins KCNA1/KV1.1 and KCNA2/KV1.2 at cerebellar cortex basket cell distal terminals, is thereby involved in ephaptic inhibitory synchronization of Purkinje cell firing and response to stress. Plays a role in spatial learning and motor coordination. Involved in the nociceptive pain response to chemical-derived stimulation. The protein is Disintegrin and metalloproteinase domain-containing protein 11 (ADAM11) of Homo sapiens (Human).